We begin with the raw amino-acid sequence, 1250 residues long: SRC kinase signaling inhibitor 1 (1250 aa).

Over residues 19 to 45 (AEGRARSPREEVGPRDPGGRGEPDPER) the composition is skewed to basic and acidic residues. Residues 19–78 (AEGRARSPREEVGPRDPGGRGEPDPERSSPPMLSADDAEYPREYRTLGGGGGGGSGGRRF) form a disordered region. Phosphoserine occurs at positions 47 and 52. Over residues 65 to 75 (LGGGGGGGSGG) the composition is skewed to gly residues. Phosphoserine is present on Ser79. The residue at position 86 (Thr86) is a Phosphothreonine. Phosphoserine occurs at positions 87, 98, 211, 233, 237, 247, and 293. Position 309 is a phosphotyrosine (Tyr309). A disordered region spans residues 352–448 (ASRESSPTRR…RRDVKPDEDL (97 aa)). Over residues 354–364 (RESSPTRRLNN) the composition is skewed to polar residues. A compositionally biased stretch (low complexity) spans 365-374 (LSPASHLASS). Phosphoserine occurs at positions 366, 375, and 392. Over residues 381–399 (PSGLPSGLPSGSPSRSRLS) the composition is skewed to low complexity. Arg397 and Arg404 each carry omega-N-methylarginine. Residues Ser411, Ser430, and Ser432 each carry the phosphoserine modification. Positions 437 to 448 (LERRDVKPDEDL) are enriched in basic and acidic residues. Residue Tyr464 is modified to Phosphotyrosine. A disordered region spans residues 538–710 (PSSPQKLADV…ASSTPAGQPT (173 aa)). The segment covering 552–563 (GGPPPPHSPYSG) has biased composition (pro residues). Residues Ser559, Ser562, and Ser566 each carry the phosphoserine modification. Omega-N-methylarginine is present on Arg567. Ser569, Ser579, Ser581, Ser583, and Ser588 each carry phosphoserine. Positions 590–607 (GGKARSTGSASTAGAPPS) are enriched in low complexity. A compositionally biased stretch (basic and acidic residues) spans 628–640 (KDTETRERMEAME). A phosphoserine mark is found at Ser664 and Ser688. Thr691 and Thr704 each carry phosphothreonine. A compositionally biased stretch (low complexity) spans 701 to 710 (ASSTPAGQPT). Coiled-coil stretches lie at residues 712-753 (VSRL…RALL) and 793-813 (EELI…IQRD). Residues 714 to 764 (RLQMQLHLRGLQNSASDLRGQLQQLRNVQLQNQESVRALLKPTEADVSMRV) are interaction with SNAP25. Phosphoserine occurs at positions 911 and 933. 2 disordered regions span residues 924 to 982 (GLDF…ERDW) and 1016 to 1094 (DCAS…TGEV). Thr951 carries the post-translational modification Phosphothreonine. Phosphoserine is present on Ser1054. A compositionally biased stretch (pro residues) spans 1069-1078 (KSPPPPPPRR). Residues Ser1110 and Ser1127 each carry the phosphoserine modification. A disordered region spans residues 1155–1250 (ELESGGSSVP…FGARNSSISF (96 aa)). The span at 1217-1250 (PNETSSPGSEKPSGSRTSIPVLTSFGARNSSISF) shows a compositional bias: polar residues.

Belongs to the SRCIN1 family. In terms of assembly, interacts with the N-terminal coiled-coil region of SNAP25. Interacts with BCAR1/p130Cas and SRC through its C-terminal domain. Interacts with CSK, CTTN, SORBS3/vinexin, SYP and MAPRE3/EB3. In terms of processing, tyrosine-phosphorylated in response to EGF and to cell adhesion to integrin ligands. In terms of tissue distribution, expressed predominantly in central nervous system with high levels detected in cortex, cerebellum, midbrain and spinal cord (at protein level). Also expressed in testis and epithelial-rich tissues such as mammary gland, lung and kidney.

It is found in the cytoplasm. It localises to the cytoskeleton. The protein resides in the cell projection. Its subcellular location is the axon. The protein localises to the dendrite. It is found in the presynapse. It localises to the postsynapse. The protein resides in the postsynaptic density. Its function is as follows. Acts as a negative regulator of SRC by activating CSK which inhibits SRC activity and downstream signaling, leading to impaired cell spreading and migration. Regulates dendritic spine morphology. Involved in calcium-dependent exocytosis. May play a role in neurotransmitter release or synapse maintenance. The sequence is that of SRC kinase signaling inhibitor 1 (Srcin1) from Mus musculus (Mouse).